The primary structure comprises 180 residues: NADH-quinone oxidoreductase subunit I (180 aa).

2 4Fe-4S ferredoxin-type domains span residues 48–80 (IVLT…LQKA) and 90–119 (EFFR…LTPD). 8 residues coordinate [4Fe-4S] cluster: Cys-60, Cys-63, Cys-66, Cys-70, Cys-99, Cys-102, Cys-105, and Cys-109.

The protein belongs to the complex I 23 kDa subunit family. In terms of assembly, NDH-1 is composed of 13 different subunits. Subunits NuoA, H, J, K, L, M, N constitute the membrane sector of the complex. [4Fe-4S] cluster serves as cofactor.

Its subcellular location is the cell inner membrane. The catalysed reaction is a quinone + NADH + 5 H(+)(in) = a quinol + NAD(+) + 4 H(+)(out). NDH-1 shuttles electrons from NADH, via FMN and iron-sulfur (Fe-S) centers, to quinones in the respiratory chain. The immediate electron acceptor for the enzyme in this species is believed to be ubiquinone. Couples the redox reaction to proton translocation (for every two electrons transferred, four hydrogen ions are translocated across the cytoplasmic membrane), and thus conserves the redox energy in a proton gradient. The sequence is that of NADH-quinone oxidoreductase subunit I from Edwardsiella ictaluri (strain 93-146).